The chain runs to 656 residues: Chaperone protein DnaK (656 aa).

T204 carries the post-translational modification Phosphothreonine; by autocatalysis. The interval 602 to 656 (KLAERVYAKKGGAAGAPPGGEAEGEPQAQAGGKKEDVVDAEFEEVKDEKKKDEDK) is disordered. The span at 620-632 (GGEAEGEPQAQAG) shows a compositional bias: low complexity. The segment covering 647–656 (KDEKKKDEDK) has biased composition (basic and acidic residues).

Belongs to the heat shock protein 70 family.

Acts as a chaperone. This chain is Chaperone protein DnaK, found in Coxiella burnetii (strain CbuG_Q212) (Coxiella burnetii (strain Q212)).